The following is a 414-amino-acid chain: CCA-adding enzyme (414 aa).

Residues Gly8 and Arg11 each contribute to the ATP site. 2 residues coordinate CTP: Gly8 and Arg11. 2 residues coordinate Mg(2+): Asp21 and Asp23. Arg91, Arg137, and Arg140 together coordinate ATP. CTP-binding residues include Arg91, Arg137, and Arg140.

The protein belongs to the tRNA nucleotidyltransferase/poly(A) polymerase family. Bacterial CCA-adding enzyme type 2 subfamily. Mg(2+) serves as cofactor.

The catalysed reaction is a tRNA precursor + 2 CTP + ATP = a tRNA with a 3' CCA end + 3 diphosphate. It carries out the reaction a tRNA with a 3' CCA end + 2 CTP + ATP = a tRNA with a 3' CCACCA end + 3 diphosphate. Its function is as follows. Catalyzes the addition and repair of the essential 3'-terminal CCA sequence in tRNAs without using a nucleic acid template. Adds these three nucleotides in the order of C, C, and A to the tRNA nucleotide-73, using CTP and ATP as substrates and producing inorganic pyrophosphate. tRNA 3'-terminal CCA addition is required both for tRNA processing and repair. Also involved in tRNA surveillance by mediating tandem CCA addition to generate a CCACCA at the 3' terminus of unstable tRNAs. While stable tRNAs receive only 3'-terminal CCA, unstable tRNAs are marked with CCACCA and rapidly degraded. In Buchnera aphidicola subsp. Acyrthosiphon pisum (strain Tuc7), this protein is CCA-adding enzyme.